The following is a 1164-amino-acid chain: DNA-directed RNA polymerase subunit beta' (1164 aa).

Residues Cys-60, Cys-62, Cys-75, and Cys-78 each coordinate Zn(2+). Mg(2+) contacts are provided by Asp-449, Asp-451, and Asp-453. Residues Cys-776, Cys-850, Cys-857, and Cys-860 each contribute to the Zn(2+) site.

The protein belongs to the RNA polymerase beta' chain family. In terms of assembly, the RNAP catalytic core consists of 2 alpha, 1 beta, 1 beta' and 1 omega subunit. When a sigma factor is associated with the core the holoenzyme is formed, which can initiate transcription. Requires Mg(2+) as cofactor. The cofactor is Zn(2+).

The catalysed reaction is RNA(n) + a ribonucleoside 5'-triphosphate = RNA(n+1) + diphosphate. Its function is as follows. DNA-dependent RNA polymerase catalyzes the transcription of DNA into RNA using the four ribonucleoside triphosphates as substrates. This is DNA-directed RNA polymerase subunit beta' from Moorella thermoacetica (strain ATCC 39073 / JCM 9320).